Reading from the N-terminus, the 347-residue chain is Olfactory receptor 2M2 (347 aa).

Over 1–25 the chain is Extracellular; that stretch reads MAWENQTFNSDFILLGIFNHSPPHT. Residue Asn5 is glycosylated (N-linked (GlcNAc...) asparagine). Residues 26-49 traverse the membrane as a helical segment; that stretch reads FLFFLVLGIFLVAFMGNSVMVLLI. Topologically, residues 50–57 are cytoplasmic; the sequence is YLDTQLHT. A helical membrane pass occupies residues 58 to 79; that stretch reads PMYFLLSQLSLMDLMLICTTVP. Residues 80-100 are Extracellular-facing; sequence KMAFNYLSGSKSISMAGCVTQ. Cys97 and Cys189 are joined by a disulfide. The chain crosses the membrane as a helical span at residues 101–120; that stretch reads IFFYISLSGSECFLLAVMAY. Over 121 to 139 the chain is Cytoplasmic; sequence DRYIAICHPLRYTNLMNPK. Residues 140-158 traverse the membrane as a helical segment; the sequence is ICGLMATFSWILGSTDGII. Over 159–195 the chain is Extracellular; that stretch reads DAVATFSFSFCGSREIAHFFCEFPSLLILSCNDTSIF. The N-linked (GlcNAc...) asparagine glycan is linked to Asn190. Residues 196–219 traverse the membrane as a helical segment; it reads EEVIFICCIVMLVFPVAIIIASYA. The Cytoplasmic segment spans residues 220 to 236; it reads RVILAVIHMGSGEGRCK. The chain crosses the membrane as a helical span at residues 237–259; it reads AFTTCSSHLMVVGMYYGAALFMY. Topologically, residues 260–272 are extracellular; the sequence is IRPTSDHSPTQDK. Residues 273-292 form a helical membrane-spanning segment; the sequence is MVSVFYTILTPMLNPLIYSL. Over 293 to 347 the chain is Cytoplasmic; the sequence is RNKEVTRAFMKILGKGKSESELPHKLYVLLFAKFFFLISIFFYDVKILALIMYIA.

This sequence belongs to the G-protein coupled receptor 1 family.

The protein resides in the cell membrane. Its function is as follows. Odorant receptor. The protein is Olfactory receptor 2M2 (OR2M2) of Homo sapiens (Human).